Here is a 100-residue protein sequence, read N- to C-terminus: Large ribosomal subunit protein bL27 (100 aa).

Residues 1–13 constitute a propeptide that is removed on maturation; the sequence is MNKLYWLTDLQLF. Residues 17 to 39 form a disordered region; it reads KGVGSSKNGRDSNPKYLGAKLGD.

It belongs to the bacterial ribosomal protein bL27 family. In terms of processing, the N-terminus is cleaved by ribosomal processing cysteine protease Prp.

This is Large ribosomal subunit protein bL27 from Ureaplasma parvum serovar 3 (strain ATCC 700970).